The sequence spans 346 residues: Fe(3+) ions import ATP-binding protein FbpC 2 (346 aa).

Residues 5–235 form the ABC transporter domain; that stretch reads LEVDGVDKSF…PVDVPTAEFI (231 aa). 37-44 is an ATP binding site; it reads GPSGCGKT.

This sequence belongs to the ABC transporter superfamily. Fe(3+) ion importer (TC 3.A.1.10) family. The complex is composed of two ATP-binding proteins (FbpC), two transmembrane proteins (FbpB) and a solute-binding protein (FbpA).

The protein localises to the cell membrane. The enzyme catalyses Fe(3+)(out) + ATP + H2O = Fe(3+)(in) + ADP + phosphate + H(+). Functionally, part of the ABC transporter complex FbpABC involved in Fe(3+) ions import. Responsible for energy coupling to the transport system. The protein is Fe(3+) ions import ATP-binding protein FbpC 2 of Rhodococcus jostii (strain RHA1).